Here is a 376-residue protein sequence, read N- to C-terminus: MSSTAGRLVTSKSELDLDHPNIEDYLPSGSSINEPRGKLSLRDLLDISPTLTEAAGAIVDDSFTRCFKSNPPEPWNWNIYLFPLYCFGVVVRYCILFPLRCFTLAFGWIIFLSLFIPVNALLKGQDRLRKKIERVLVEMICSFFVASWTGVVKYHGPRPSIRPKQVYVANHTSMIDFIVLEQMTAFAVIMQKHPGWVGLLQSTILESVGCIWFNRSEAKDREIVAKKLRDHVQGADSNPLLIFPEGTCVNNNYTVMFKKGAFELDCTVCPIAIKYNKIFVDAFWNSRKQSFTMHLLQLMTSWAVVCEVWYLEPQTIRPGETGIEFAERVRDMISLRAGLKKVPWDGYLKYSRPSPKHSERKQQSFAESILARLEEK.

Topologically, residues 1 to 78 are cytoplasmic; the sequence is MSSTAGRLVT…SNPPEPWNWN (78 aa). S13 is modified (phosphoserine). 3 consecutive transmembrane segments (helical) span residues 79-99, 102-122, and 135-155; these read IYLF…LFPL, FTLA…NALL, and VLVE…VKYH. Topologically, residues 156-376 are cytoplasmic; sequence GPRPSIRPKQ…ESILARLEEK (221 aa). A catalytic region spans residues 168–180; that stretch reads VANHTSMIDFIVL. Positions 171–176 match the HXXXXD motif motif; the sequence is HTSMID. Residue 209–218 coordinates sn-glycerol 3-phosphate; it reads GCIWFNRSEA. A glycerol-3-phosphate binding region spans residues 242 to 262; that stretch reads IFPEGTCVNNNYTVMFKKGAF. The segment at 266–275 is catalytic; that stretch reads CTVCPIAIKY. The segment at 369–373 is endoplasmic reticulum targeting; sequence ILARL.

The protein belongs to the 1-acyl-sn-glycerol-3-phosphate acyltransferase family. Self-interacts. Interacts with LPAT2 and LPCAT2. As to expression, up-regulated during embryogenesis. Expressed in seedlings, leaves, stems, roots, floral buds, flowers, pollen, and siliques at various developmental stages.

It is found in the endoplasmic reticulum membrane. The catalysed reaction is sn-glycerol 3-phosphate + an acyl-CoA = a 1-acyl-sn-glycero-3-phosphate + CoA. The protein operates within glycerolipid metabolism; triacylglycerol biosynthesis. Essential protein. Required for male and female gametophytes development. Exhibits sn-1 acyltransferase activity with high specificity for acyl-coenzyme A, thus triggering storage lipid biosynthesis and playing an important role in the Kennedy pathway of glycerolipid biosynthesis. Catalyzes triacylglycerol (TAG) accumulation involved in membrane lipid and oil biosynthesis, especially in seeds. Also contributes to the biosynthesis of both polar lipids and TAG in developing leaves, as well as lipid droplet production in developing pollen grains. Seems to not contribute to surface lipid biosynthesis (e.g. waxes and cutin). This is Glycerol-3-phosphate acyltransferase 9 from Arabidopsis thaliana (Mouse-ear cress).